We begin with the raw amino-acid sequence, 215 residues long: Adenylate kinase (215 aa).

10 to 15 (GAGKGT) is a binding site for ATP. The tract at residues 30 to 59 (STGDMFRKAIKDETDLGKEAKSYMDRGELV) is NMP. Residues threonine 31, arginine 36, 57 to 59 (ELV), 85 to 88 (GFPR), and glutamine 92 each bind AMP. The segment at 126–163 (GRRICEKCGTTYHLVFNPPKVDGICDIDGGKLYQREDD) is LID. Arginine 127 is an ATP binding site. Zn(2+)-binding residues include cysteine 130 and cysteine 133. Position 136-137 (136-137 (TY)) interacts with ATP. The Zn(2+) site is built by cysteine 150 and aspartate 153. AMP-binding residues include arginine 160 and arginine 171. Lysine 199 lines the ATP pocket.

This sequence belongs to the adenylate kinase family. In terms of assembly, monomer.

Its subcellular location is the cytoplasm. The enzyme catalyses AMP + ATP = 2 ADP. Its pathway is purine metabolism; AMP biosynthesis via salvage pathway; AMP from ADP: step 1/1. Functionally, catalyzes the reversible transfer of the terminal phosphate group between ATP and AMP. Plays an important role in cellular energy homeostasis and in adenine nucleotide metabolism. This chain is Adenylate kinase, found in Staphylococcus epidermidis (strain ATCC 35984 / DSM 28319 / BCRC 17069 / CCUG 31568 / BM 3577 / RP62A).